Here is a 375-residue protein sequence, read N- to C-terminus: Probable pectin lyase C (375 aa).

A signal peptide spans 1-20 (MKITSTIPAVLLGLAPLSAA). 2 cysteine pairs are disulfide-bonded: cysteine 83–cysteine 100 and cysteine 92–cysteine 220. The active site involves arginine 250. A disulfide bridge links cysteine 317 with cysteine 325.

This sequence belongs to the polysaccharide lyase 1 family.

Its subcellular location is the secreted. It carries out the reaction Eliminative cleavage of (1-&gt;4)-alpha-D-galacturonan methyl ester to give oligosaccharides with 4-deoxy-6-O-methyl-alpha-D-galact-4-enuronosyl groups at their non-reducing ends.. Pectinolytic enzymes consist of four classes of enzymes: pectin lyase, polygalacturonase, pectin methylesterase and rhamnogalacturonase. Among pectinolytic enzymes, pectin lyase is the most important in depolymerization of pectin, since it cleaves internal glycosidic bonds of highly methylated pectins. The sequence is that of Probable pectin lyase C (pelC) from Aspergillus oryzae (strain ATCC 42149 / RIB 40) (Yellow koji mold).